An 82-amino-acid chain; its full sequence is MSLSREKVLESIAQIVHDETGIDKGSVQLDKAFVDDLDIDSISMMTIVVNAEEKYGIEIPDDKVRELRTVGDAVDFIIAAKA.

The region spanning 3–81 (LSREKVLESI…DAVDFIIAAK (79 aa)) is the Carrier domain. O-(pantetheine 4'-phosphoryl)serine is present on Ser41.

This sequence belongs to the acyl carrier protein (ACP) family. Post-translationally, 4'-phosphopantetheine is transferred from CoA to a specific serine of apo-ACP by AcpS. This modification is essential for activity because fatty acids are bound in thioester linkage to the sulfhydryl of the prosthetic group.

The protein resides in the cytoplasm. The protein operates within lipid metabolism; fatty acid biosynthesis. Functionally, carrier of the growing fatty acid chain in fatty acid biosynthesis. The sequence is that of Acyl carrier protein from Tropheryma whipplei (strain Twist) (Whipple's bacillus).